The chain runs to 359 residues: 3-dehydroquinate synthase (359 aa).

Residues 106–110 (GVVGD), 130–131 (TT), Lys143, Lys152, and 170–173 (TLQT) each bind NAD(+). The Zn(2+) site is built by Glu185, His248, and His265.

Belongs to the sugar phosphate cyclases superfamily. Dehydroquinate synthase family. Requires Co(2+) as cofactor. The cofactor is Zn(2+). NAD(+) is required as a cofactor.

It localises to the cytoplasm. The catalysed reaction is 7-phospho-2-dehydro-3-deoxy-D-arabino-heptonate = 3-dehydroquinate + phosphate. It functions in the pathway metabolic intermediate biosynthesis; chorismate biosynthesis; chorismate from D-erythrose 4-phosphate and phosphoenolpyruvate: step 2/7. Functionally, catalyzes the conversion of 3-deoxy-D-arabino-heptulosonate 7-phosphate (DAHP) to dehydroquinate (DHQ). The sequence is that of 3-dehydroquinate synthase from Desulforamulus reducens (strain ATCC BAA-1160 / DSM 100696 / MI-1) (Desulfotomaculum reducens).